Here is an 87-residue protein sequence, read N- to C-terminus: MSERNQRKVYTGRVVSDKMDKTITVLVETYKTHSLYGKRVKYSKKYKAHDEQNQAKVGDIVKIMETRPLSATKRFRLVEIVEEAVII.

Belongs to the universal ribosomal protein uS17 family. Part of the 30S ribosomal subunit.

One of the primary rRNA binding proteins, it binds specifically to the 5'-end of 16S ribosomal RNA. This chain is Small ribosomal subunit protein uS17, found in Bacillus cytotoxicus (strain DSM 22905 / CIP 110041 / 391-98 / NVH 391-98).